The primary structure comprises 1083 residues: Solute carrier family 12 member 7 (1083 aa).

The disordered stretch occupies residues 1 to 52; that stretch reads MPTNFTVVPVEAHADGGGDETAERTEAPGTPEGPEPERPSPGDGNPRENSPF. Over 1–119 the chain is Cytoplasmic; it reads MPTNFTVVPV…RREAKAPRMG (119 aa). Residues 12–26 show a composition bias toward basic and acidic residues; the sequence is AHADGGGDETAERTE. Thr-30 carries the post-translational modification Phosphothreonine. Residues Ser-50 and Ser-62 each carry the phosphoserine modification. The discontinuously helical transmembrane segment at 120 to 142 threads the bilayer; it reads TFIGVYLPCLQNILGVILFLRLT. K(+) contacts are provided by Asn-131 and Ile-132. Residue Val-135 coordinates chloride. Over 143–149 the chain is Extracellular; that stretch reads WIVGVAG. Residues 150–172 traverse the membrane as a helical segment; that stretch reads VLESFLIVAMCCTCTMLTAISMS. At 173-196 the chain is on the cytoplasmic side; the sequence is AIATNGVVPAGGSYYMISRSLGPE. A helical membrane pass occupies residues 197-225; sequence FGGAVGLCFYLGTTFAGAMYILGTIEIFL. Over 226 to 249 the chain is Extracellular; the sequence is TYISPGAAIFQAEAAGGEAAAMLH. 2 helical membrane-spanning segments follow: residues 250-270 and 272-300; these read NMRV…FVGV and YVNK…KSAF. Residues 301–419 are Extracellular-facing; sequence DPPDIPVCLL…PYVLTDIAAS (119 aa). Disulfide bonds link Cys-308/Cys-323 and Cys-343/Cys-352. Asn-312 carries N-linked (GlcNAc...) asparagine glycosylation. Asn-360 carries an N-linked (GlcNAc...) asparagine glycan. A helical membrane pass occupies residues 420 to 440; it reads FTLLVGIYFPSVTGIMAGSNR. 2 residues coordinate K(+): Pro-429 and Thr-432. Chloride is bound at residue Pro-429. Positions 433 and 434 each coordinate chloride. At 441 to 450 the chain is on the cytoplasmic side; it reads SGDLKDAQKS. A helical membrane pass occupies residues 451–473; it reads IPTGTILAIVTTSFIYLSCIVLF. The Extracellular segment spans residues 474 to 504; sequence GACIEGVVLRDKFGEALQGNLVIGMLAWPSP. A helical membrane pass occupies residues 505-531; the sequence is WVIVIGSFFSTCGAGLQSLTGAPRLLQ. The Cytoplasmic segment spans residues 532–554; the sequence is AIARDGIVPFLQVFGHGKANGEP. A run of 2 helical transmembrane segments spans residues 555 to 571 and 574 to 598; these read TWAL…GILI and LDSV…ACAV. A chloride-binding site is contributed by Tyr-589. The Cytoplasmic portion of the chain corresponds to 599–612; sequence QTLLRTPNWRPRFK. 2 helical membrane-spanning segments follow: residues 613–632 and 636–651; these read FYHW…LMFI and YYAL…IYKY. The Cytoplasmic portion of the chain corresponds to 652-1083; the sequence is IEYRGAEKEW…GGREVITIYS (432 aa). Residues 664–680 form a scissor helix region; the sequence is GIRGLSLNAARYALLRV. A phosphothreonine mark is found at Thr-973 and Thr-980.

This sequence belongs to the SLC12A transporter family. K/Cl co-transporter subfamily. Homodimer; adopts a domain-swap conformation at the scissor helices connecting the transmembrane domain and C-terminal domain. Heterodimer with K-Cl cotransporter SLC12A5. Detected in muscle, brain, lung, heart and kidney.

It is found in the cell membrane. It catalyses the reaction K(+)(in) + chloride(in) = K(+)(out) + chloride(out). With respect to regulation, activated by N-ethylmaleimide (NEM). Inhibited by furosemide, DIDS and bumetanide. The inhibition is much stronger in the presence of 50 mM K(+) in the uptake medium. Inhibited by DIOA. Inhibited by WNK3. Mediates electroneutral potassium-chloride cotransport when activated by cell swelling. May mediate K(+) uptake into Deiters' cells in the cochlea and contribute to K(+) recycling in the inner ear. Important for the survival of cochlear outer and inner hair cells and the maintenance of the organ of Corti. May be required for basolateral Cl(-) extrusion in the kidney and contribute to renal acidification. The sequence is that of Solute carrier family 12 member 7 from Homo sapiens (Human).